A 471-amino-acid chain; its full sequence is Reticulon-2 (471 aa).

3 disordered regions span residues 1–137 (MGQV…ERPL), 153–181 (SAGSGEDSATSSSTPLENEEPDGLEASEA), and 205–234 (QLSPSSGTPQAHTPSPQRSQDSNSGPDDEP). A compositionally biased stretch (low complexity) spans 14–25 (APSTASSTPDST). A compositionally biased stretch (basic and acidic residues) spans 32-43 (SDFRELHTAREF). S44 carries the phosphoserine modification. 2 stretches are compositionally biased toward polar residues: residues 100 to 118 (PQQSGLGDSLESIPSLSQS) and 159 to 168 (DSATSSSTPL). Over residues 169-181 (ENEEPDGLEASEA) the composition is skewed to acidic residues. A compositionally biased stretch (polar residues) spans 205 to 229 (QLSPSSGTPQAHTPSPQRSQDSNSG). 2 positions are modified to phosphoserine: S226 and S228. One can recognise a Reticulon domain in the interval 272 to 471 (VADLLYWKDT…SVSGSKAKAE (200 aa)). 2 consecutive transmembrane segments (helical) span residues 295-315 (LLCLLHFSIVSVAAHLALLGL) and 390-410 (LLFYILTFVGAIFNGLTLVIL).

In terms of assembly, interacts with SPAST. Interacts with BACE1. Interacts (via first transmembrane domain) with ARL6IP5/GTRAP3-18. Interacts (via N-terminus) with SLC1A1/EAAC1; the interaction promotes cell surface expression of SLC1A1. In terms of tissue distribution, detected in skeletal and cardiac muscle (at protein level). Expressed predominantly in neural and muscular tissues.

The protein resides in the endoplasmic reticulum membrane. It is found in the sarcoplasmic reticulum membrane. Its subcellular location is the cell membrane. It localises to the sarcolemma. The protein localises to the T-tubule. The protein resides in the cytoplasm. It is found in the myofibril. Its subcellular location is the sarcomere. It localises to the z line. The protein localises to the cytoskeleton. Inhibits amyloid precursor protein processing, probably by blocking BACE1 activity. Enhances trafficking of the glutamate transporter SLC1A1/EAAC1 from the endoplasmic reticulum to the cell surface. Plays a role in the translocation of SLC2A4/GLUT4 from intracellular membranes to the cell membrane which facilitates the uptake of glucose into the cell. The polypeptide is Reticulon-2 (Mus musculus (Mouse)).